Here is a 38-residue protein sequence, read N- to C-terminus: Photosystem II reaction center protein L (38 aa).

The helical transmembrane segment at 17-37 threads the bilayer; the sequence is SLFWGLLLIFVLAVLFSNYFF.

This sequence belongs to the PsbL family. As to quaternary structure, PSII is composed of 1 copy each of membrane proteins PsbA, PsbB, PsbC, PsbD, PsbE, PsbF, PsbH, PsbI, PsbJ, PsbK, PsbL, PsbM, PsbT, PsbX, PsbY, PsbZ, Psb30/Ycf12, at least 3 peripheral proteins of the oxygen-evolving complex and a large number of cofactors. It forms dimeric complexes.

Its subcellular location is the plastid. The protein localises to the chloroplast thylakoid membrane. Its function is as follows. One of the components of the core complex of photosystem II (PSII). PSII is a light-driven water:plastoquinone oxidoreductase that uses light energy to abstract electrons from H(2)O, generating O(2) and a proton gradient subsequently used for ATP formation. It consists of a core antenna complex that captures photons, and an electron transfer chain that converts photonic excitation into a charge separation. This subunit is found at the monomer-monomer interface and is required for correct PSII assembly and/or dimerization. This Chaetosphaeridium globosum (Charophycean green alga) protein is Photosystem II reaction center protein L.